The primary structure comprises 124 residues: Large ribosomal subunit protein bL12 (124 aa).

The protein belongs to the bacterial ribosomal protein bL12 family. In terms of assembly, homodimer. Part of the ribosomal stalk of the 50S ribosomal subunit. Forms a multimeric L10(L12)X complex, where L10 forms an elongated spine to which 2 to 4 L12 dimers bind in a sequential fashion. Binds GTP-bound translation factors.

In terms of biological role, forms part of the ribosomal stalk which helps the ribosome interact with GTP-bound translation factors. Is thus essential for accurate translation. This Campylobacter fetus subsp. fetus (strain 82-40) protein is Large ribosomal subunit protein bL12.